The chain runs to 298 residues: Probable endonuclease 4 (298 aa).

9 residues coordinate Zn(2+): His-69, His-111, Glu-146, Asp-180, His-183, His-215, Asp-228, His-230, and Glu-260.

The protein belongs to the AP endonuclease 2 family. It depends on Zn(2+) as a cofactor.

It carries out the reaction Endonucleolytic cleavage to 5'-phosphooligonucleotide end-products.. In terms of biological role, endonuclease IV plays a role in DNA repair. It cleaves phosphodiester bonds at apurinic or apyrimidinic (AP) sites, generating a 3'-hydroxyl group and a 5'-terminal sugar phosphate. The protein is Probable endonuclease 4 of Bacillus cytotoxicus (strain DSM 22905 / CIP 110041 / 391-98 / NVH 391-98).